Consider the following 55-residue polypeptide: Riparin-1.5 acid (55 aa).

Residues methionine 1–alanine 15 form the signal peptide. The propeptide occupies glutamine 16–arginine 41. The cysteines at positions 47 and 53 are disulfide-linked. Residues asparagine 54–histidine 55 constitute a propeptide that is removed on maturation.

As to expression, expressed by the skin glands.

The protein localises to the secreted. In Crinia riparia (Streambank froglet), this protein is Riparin-1.5 acid.